The chain runs to 237 residues: MNRPLLSVAGSLFVAAWALYIFSCFQHGHVPPRRIPPHDTFGALPTAALPSNARDTAAHPSDTADNTSGSSTTTDPRSHGNAPPAPVGGAAQTHTQPPVQTAMRIALWNRATHGEQGALQHLLAGLWIQTEISPNSGDIHPLLFFDREHAEITFSRASVQEIFLVDSAHTHRKTVSFLTRNTAISSIRRRLEVTFESHEVIHVRAVEDVARLKIGSTSMWDGQYTRYHAGPASAPSP.

An N-terminal signal peptide occupies residues 1 to 28 (MNRPLLSVAGSLFVAAWALYIFSCFQHG). Positions 52–96 (NARDTAAHPSDTADNTSGSSTTTDPRSHGNAPPAPVGGAAQTHTQ) are disordered. The segment covering 63 to 75 (TADNTSGSSTTTD) has biased composition (polar residues).

This is an uncharacterized protein from Treponema pallidum (strain Nichols).